A 490-amino-acid chain; its full sequence is Adenylosuccinate synthetase 1, chloroplastic (490 aa).

Residues 1-47 (MSLSTLSHPAAAAAAATGSGKSHFRTAPAAQSVRFPKARPPVPAAVS) constitute a chloroplast transit peptide. Positions 14-36 (AAATGSGKSHFRTAPAAQSVRFP) are disordered. GTP-binding positions include 77 to 83 (GDEGKGK) and 105 to 107 (GHT). D78 (proton acceptor) is an active-site residue. Mg(2+)-binding residues include D78 and G105. IMP contacts are provided by residues 78–81 (DEGK), 103–106 (NAGH), T195, R209, Q289, T304, and R368. The Proton donor role is filled by H106. 364 to 370 (TTTGRPR) is a binding site for substrate. GTP contacts are provided by residues R370, 396 to 398 (KLD), and 479 to 481 (GVG).

Belongs to the adenylosuccinate synthetase family. As to quaternary structure, homodimer. It depends on Mg(2+) as a cofactor.

Its subcellular location is the plastid. It is found in the chloroplast. It catalyses the reaction IMP + L-aspartate + GTP = N(6)-(1,2-dicarboxyethyl)-AMP + GDP + phosphate + 2 H(+). Its pathway is purine metabolism; AMP biosynthesis via de novo pathway; AMP from IMP: step 1/2. Its function is as follows. Plays an important role in the de novo pathway and in the salvage pathway of purine nucleotide biosynthesis. Catalyzes the first committed step in the biosynthesis of AMP from IMP. This is Adenylosuccinate synthetase 1, chloroplastic from Sorghum bicolor (Sorghum).